The chain runs to 96 residues: Muconolactone Delta-isomerase (96 aa).

It belongs to the muconolactone Delta-isomerase family. As to quaternary structure, homodecamer.

The catalysed reaction is (S)-muconolactone = (4,5-dihydro-5-oxofuran-2-yl)-acetate. It participates in aromatic compound metabolism; beta-ketoadipate pathway; 5-oxo-4,5-dihydro-2-furylacetate from catechol: step 3/3. This is Muconolactone Delta-isomerase (catC) from Pseudomonas aeruginosa (strain ATCC 15692 / DSM 22644 / CIP 104116 / JCM 14847 / LMG 12228 / 1C / PRS 101 / PAO1).